We begin with the raw amino-acid sequence, 387 residues long: MKILKSNPFLALANNYMIDAPEPSNISYFWNFGSLLACVLVIQIVIGILLACFYIPNMDLAFLSVERIVRDVNYGFLLRAFHANGASFFFIFLYLHIGRGLYYGSYKYPRTMTWNIGVIIFLLTIITAFLGYCLPANQMSFWGATVITNLLSAVPFIGDDLVHLLWGGFSVSNPTLNRFFSLHYLMPFVIAALSVMHLIALHTNGSSNPLGVTANMDRIPMNPYYLIKDLITIFIFLIGINYMAFYNPYGFMEPDCALPADPLKTPMSIVPEWYLLPFYAILRAIPNFQLGVIAMLLSILVLLLLPLLDFSAIRGNSFNPFGKFFFWTFVADFVILAWIGGSHPENVFITIGAIATIFYFSYFFILIPVYTILGNTLIDLNLSSIKR.

Helical transmembrane passes span phenylalanine 32–cysteine 52, phenylalanine 76–glycine 98, threonine 113–cysteine 133, and phenylalanine 179–isoleucine 199. Residues histidine 82 and histidine 96 each coordinate heme b. Positions 183 and 197 each coordinate heme b. Histidine 202 is a binding site for a ubiquinone. 4 helical membrane-spanning segments follow: residues tyrosine 225–phenylalanine 245, glutamine 289–aspartate 309, phenylalanine 321–glycine 341, and phenylalanine 348–proline 368.

It belongs to the cytochrome b family. Fungal cytochrome b-c1 complex contains 10 subunits; 3 respiratory subunits, 2 core proteins and 5 low-molecular weight proteins. Cytochrome b-c1 complex is a homodimer. It depends on heme b as a cofactor.

The protein localises to the mitochondrion inner membrane. Functionally, component of the ubiquinol-cytochrome c reductase complex (complex III or cytochrome b-c1 complex) that is part of the mitochondrial respiratory chain. The b-c1 complex mediates electron transfer from ubiquinol to cytochrome c. Contributes to the generation of a proton gradient across the mitochondrial membrane that is then used for ATP synthesis. The polypeptide is Cytochrome b (cob) (Schizosaccharomyces pombe (strain 972 / ATCC 24843) (Fission yeast)).